We begin with the raw amino-acid sequence, 131 residues long: MTDPIADYLTRLRNAISAKHRVVEVPASNLKKEITKILFDKGYILNYKFVEDGPQGTIKVALKYDSVNKVNAIKKLIRVSTPGLRKYTGYKDMPRVINGLGIAIISTSKGVMTNKEAAELKIGGEVLCYVY.

Belongs to the universal ribosomal protein uS8 family. Part of the 30S ribosomal subunit. Contacts proteins S5 and S12.

In terms of biological role, one of the primary rRNA binding proteins, it binds directly to 16S rRNA central domain where it helps coordinate assembly of the platform of the 30S subunit. The protein is Small ribosomal subunit protein uS8 of Phocaeicola vulgatus (strain ATCC 8482 / DSM 1447 / JCM 5826 / CCUG 4940 / NBRC 14291 / NCTC 11154) (Bacteroides vulgatus).